We begin with the raw amino-acid sequence, 338 residues long: Anthranilate phosphoribosyltransferase (338 aa).

Residues Gly78, 81–82 (GD), Thr86, 88–91 (NIST), 106–114 (KHGNRSVSS), and Ser118 contribute to the 5-phospho-alpha-D-ribose 1-diphosphate site. Gly78 lines the anthranilate pocket. Mg(2+) is bound at residue Ser90. Asn109 is a binding site for anthranilate. Position 164 (Arg164) interacts with anthranilate. Residues Asp223 and Glu224 each contribute to the Mg(2+) site.

It belongs to the anthranilate phosphoribosyltransferase family. In terms of assembly, homodimer. The cofactor is Mg(2+).

The enzyme catalyses N-(5-phospho-beta-D-ribosyl)anthranilate + diphosphate = 5-phospho-alpha-D-ribose 1-diphosphate + anthranilate. Its pathway is amino-acid biosynthesis; L-tryptophan biosynthesis; L-tryptophan from chorismate: step 2/5. Catalyzes the transfer of the phosphoribosyl group of 5-phosphorylribose-1-pyrophosphate (PRPP) to anthranilate to yield N-(5'-phosphoribosyl)-anthranilate (PRA). This Bacillus subtilis (strain 168) protein is Anthranilate phosphoribosyltransferase.